Consider the following 492-residue polypeptide: MSSSGNNASVYGGDEINAIVLDSSSFHTRIGYAGDDFPKIITPSSYASPNEDAMELDNKKKNGKSKSSKIFGESINIPRSNHNVSPILKDSVIIDWEAAIEQYHYYFDDVLTLNYKEQPILITEPVWCTPQYRQTLLETFYENFDFPALFLAKSPTCISFQQGRPNCLVVDIGHDSVSVTPVIDGISLLKNSMKTNYGGQYLNDQIEDMLTHKFSGVNFENRYRIKSKTPTVYPEESKYTVRDLSENITQSFDDYQRQNIWHEFKETMLEVPEKKFNTSNTSQANSLKEIYSQDSNKRLFELPTGQSLELCLERFQLADSLFDPQSYKFNNPDLATKYPPSNGELSLTNSYDDYKPLKRARKAESNQSTPPPSDAKKPSSKTSQIRGLTHLITHTLSTIDIDLRSSVAHNIIVTGGVSLIPQLTERLYSELSNSNPGLKIRLHAVGNSSERFNQAWIGGSVLASLGTFHQMWVSKQEYEEAGAERILNQRFR.

3 disordered regions span residues 48 to 67 (SPNE…KSKS), 331 to 350 (NPDL…LTNS), and 359 to 384 (RARK…KTSQ).

This sequence belongs to the actin family. ARP4 subfamily. In terms of assembly, component of the NuA4 histone acetyltransferase complex, of the INO80 chromatin remodeling complex, and of the SWR1 chromatin remodeling complex.

The protein localises to the nucleus. Functionally, chromatin interaction component of the NuA4 histone acetyltransferase complex which is involved in transcriptional activation of selected genes principally by acetylation of nucleosomal histone H4 and H2A. The NuA4 complex is also involved in DNA repair. Is required for NuA4 complex integrity. Component of the SWR1 complex which mediates the ATP-dependent exchange of histone H2A for the H2A variant HZT1 leading to transcriptional regulation of selected genes by chromatin remodeling. Component of the INO80 complex which remodels chromatin by shifting nucleosomes and is involved in DNA repair. This chain is Actin-related protein 4 (ARP4), found in Debaryomyces hansenii (strain ATCC 36239 / CBS 767 / BCRC 21394 / JCM 1990 / NBRC 0083 / IGC 2968) (Yeast).